The sequence spans 448 residues: Cysteine--tRNA ligase (448 aa).

A Zn(2+)-binding site is contributed by C27. The 'HIGH' region signature appears at 29–39 (PTVYNYIHVGN). 3 residues coordinate Zn(2+): C210, H235, and E239. The short motif at 267 to 271 (KMSKS) is the 'KMSKS' region element. Residue K270 coordinates ATP.

It belongs to the class-I aminoacyl-tRNA synthetase family. In terms of assembly, monomer. The cofactor is Zn(2+).

It localises to the cytoplasm. It catalyses the reaction tRNA(Cys) + L-cysteine + ATP = L-cysteinyl-tRNA(Cys) + AMP + diphosphate. This is Cysteine--tRNA ligase from Lactococcus lactis subsp. cremoris (strain SK11).